Consider the following 188-residue polypeptide: Capsid protein (188 aa).

Belongs to the tymoviruses capsid protein family.

The protein localises to the virion. Functionally, self-assembles to form a T=3 icosahedral capsid composed of 180 copies of the capsid protein. The capsid encapsulates the single-stranded RNA genome. The chain is Capsid protein from Solanum lycopersicum (Tomato).